A 917-amino-acid chain; its full sequence is Hexokinase-1 (917 aa).

An N-acetylmethionine modification is found at Met-1. Residues 1 to 10 (MIAAQLLAYY) form a mitochondrial-binding peptide (MBP) region. Hexokinase domains are found at residues 16 to 458 (DDQV…MVTA) and 464 to 906 (AEQH…LITA). ATP is bound by residues Arg-30 and 84–89 (DLGGSS). The hexokinase small subdomain 1 stretch occupies residues 73 to 207 (DGSEKGDFIA…DYDANIVAVV (135 aa)). 84–91 (DLGGSSFR) contributes to the D-glucose 6-phosphate binding site. D-glucose-binding positions include Ser-155, 172 to 173 (TK), and 208 to 209 (ND). Positions 208–447 (NDTVGTMMTC…SDVRFLLSES (240 aa)) are hexokinase large subdomain 1. D-glucose 6-phosphate-binding residues include Asp-209 and Thr-232. D-glucose contacts are provided by residues Asn-235, Glu-260, and 291–294 (QLFE). Ser-337 is subject to Phosphoserine. ATP is bound at residue Asn-345. D-glucose 6-phosphate is bound at residue 413-415 (DGS). Residue 425–426 (RR) coordinates ATP. D-glucose 6-phosphate-binding positions include Ser-449 and 532 to 536 (DLGGT). Residues 521–655 (DGTENGDFLA…EFDLDVVAVV (135 aa)) form a hexokinase small subdomain 2 region. Residue 532 to 537 (DLGGTN) coordinates ATP. D-glucose is bound by residues 603-604 (SF), 620-621 (TK), and 656-657 (ND). The segment at 656 to 895 (NDTVGTMMTC…CNVSFLLSED (240 aa)) is hexokinase large subdomain 2. The D-glucose 6-phosphate site is built by Asp-657 and Thr-680. Position 680 (Thr-680) interacts with ATP. D-glucose is bound by residues 682 to 683 (SN), Glu-708, and Glu-742. Residues 747 to 748 (GM), 784 to 788 (TKFLS), and 863 to 867 (TLYKL) each bind ATP. Residues 861–863 (DGT) and Ser-897 contribute to the D-glucose 6-phosphate site.

It belongs to the hexokinase family. In terms of assembly, monomer. Interacts with RABL2/RABL2A; binds preferentially to GTP-bound RABL2. Interacts with VDAC1. The HK1-VDAC1 complex interacts with ATF2. Interacts (via N-terminal spermatogenic cell-specific region) with PFKM (via C-terminus). Interacts with SMAD5. In terms of tissue distribution, isoform 2: Erythrocyte specific. Isoform 3: Testis-specific. Isoform 4: Testis-specific.

It localises to the mitochondrion outer membrane. The protein resides in the cytoplasm. It is found in the cytosol. It carries out the reaction a D-hexose + ATP = a D-hexose 6-phosphate + ADP + H(+). The enzyme catalyses D-fructose + ATP = D-fructose 6-phosphate + ADP + H(+). The catalysed reaction is D-glucose + ATP = D-glucose 6-phosphate + ADP + H(+). It catalyses the reaction D-mannose + ATP = D-mannose 6-phosphate + ADP + H(+). It carries out the reaction D-glucosamine + ATP = D-glucosamine 6-phosphate + ADP + H(+). Its pathway is carbohydrate metabolism; hexose metabolism. It participates in carbohydrate degradation; glycolysis; D-glyceraldehyde 3-phosphate and glycerone phosphate from D-glucose: step 1/4. Its activity is regulated as follows. Hexokinase is an allosteric enzyme inhibited by its product D-glucose 6-phosphate. Hexokinase activity is inhibited by N-acetyl-D-glucosamine. Its function is as follows. Catalyzes the phosphorylation of various hexoses, such as D-glucose, D-glucosamine, D-fructose, D-mannose and 2-deoxy-D-glucose, to hexose 6-phosphate (D-glucose 6-phosphate, D-glucosamine 6-phosphate, D-fructose 6-phosphate, D-mannose 6-phosphate and 2-deoxy-D-glucose 6-phosphate, respectively). Does not phosphorylate N-acetyl-D-glucosamine. Mediates the initial step of glycolysis by catalyzing phosphorylation of D-glucose to D-glucose 6-phosphate. Involved in innate immunity and inflammation by acting as a pattern recognition receptor for bacterial peptidoglycan. When released in the cytosol, N-acetyl-D-glucosamine component of bacterial peptidoglycan inhibits the hexokinase activity of HK1 and causes its dissociation from mitochondrial outer membrane, thereby activating the NLRP3 inflammasome. This Homo sapiens (Human) protein is Hexokinase-1.